A 308-amino-acid chain; its full sequence is D-alanine--D-alanine ligase (308 aa).

The ATP-grasp domain maps to K102–E302. P128–T183 is an ATP binding site. Mg(2+) contacts are provided by D252, E269, and N271.

The protein belongs to the D-alanine--D-alanine ligase family. Mg(2+) is required as a cofactor. Mn(2+) serves as cofactor.

Its subcellular location is the cytoplasm. The catalysed reaction is 2 D-alanine + ATP = D-alanyl-D-alanine + ADP + phosphate + H(+). Its pathway is cell wall biogenesis; peptidoglycan biosynthesis. Functionally, cell wall formation. The chain is D-alanine--D-alanine ligase from Agrobacterium fabrum (strain C58 / ATCC 33970) (Agrobacterium tumefaciens (strain C58)).